The primary structure comprises 372 residues: uncharacterized protein (372 aa).

S-adenosyl-L-methionine-binding positions include Asp202 and 227 to 229 (GDF).

Belongs to the class I-like SAM-binding methyltransferase superfamily. Cation-independent O-methyltransferase family.

This is an uncharacterized protein from Methanocaldococcus jannaschii (strain ATCC 43067 / DSM 2661 / JAL-1 / JCM 10045 / NBRC 100440) (Methanococcus jannaschii).